The following is a 71-amino-acid chain: uncharacterized protein (71 aa).

The span at 20–32 (SSGRRQLTATQPR) shows a compositional bias: polar residues. Residues 20-46 (SSGRRQLTATQPRSDPESQRGRTSSNR) form a disordered region.

This is an uncharacterized protein from Rhizobium leguminosarum.